The following is a 993-amino-acid chain: Mediator of RNA polymerase II transcription subunit 24 (993 aa).

Phosphoserine occurs at positions 827 and 829.

Belongs to the Mediator complex subunit 24 family. As to quaternary structure, component of the Mediator complex, which includes at least CDK8, MED4, MED6, MED11, MED14, MED17, MED18, MED20, MED21, MED22, MED27, MED28, MED30 and MED31.

The protein localises to the nucleus. Functionally, component of the Mediator complex, a coactivator involved in the regulated transcription of nearly all RNA polymerase II-dependent genes. Mediator functions as a bridge to convey information from gene-specific regulatory proteins to the basal RNA polymerase II transcription machinery. Mediator is recruited to promoters by direct interactions with regulatory proteins and serves as a scaffold for the assembly of a functional preinitiation complex with RNA polymerase II and the general transcription factors. Required for activated transcription of the MtnA, MtnB and MtnD genes. This is Mediator of RNA polymerase II transcription subunit 24 (MED24) from Drosophila melanogaster (Fruit fly).